The primary structure comprises 485 residues: Protein DETOXIFICATION 14 (485 aa).

12 helical membrane-spanning segments follow: residues 30 to 50 (LSYIAGPMIAVNSSMYVLQVI), 68 to 88 (IAVSFCSVTGFSVVFGLASAL), 112 to 132 (IVSLFLVCIPLSLLWTYIGDI), 147 to 167 (GKFATWLIPALFGYATLQPLV), 175 to 195 (LILPLVMSSVSSLCIHIVLCW), 207 to 227 (GAAIAIGVSYWLNVTVLGLYM), 259 to 279 (ASMICLEWWSFEFLVLLSGIL), 288 to 308 (VLSVCLSTQSSLYQIPESLGA), 329 to 349 (AVYTAMVITGVESIMVGAIVF), 372 to 392 (MAPLLSLSVIFDALHAALSGV), 405 to 425 (VNLAAYYLFGIPTAILLAFGF), and 432 to 452 (LWIGITVGSCVQAVLLGLIVI).

This sequence belongs to the multi antimicrobial extrusion (MATE) (TC 2.A.66.1) family.

Its subcellular location is the membrane. The sequence is that of Protein DETOXIFICATION 14 from Arabidopsis thaliana (Mouse-ear cress).